Consider the following 252-residue polypeptide: Adenosylcobinamide-GDP ribazoletransferase (252 aa).

Helical transmembrane passes span 33-53 (FISP…VVLL), 105-125 (TGSG…IATL), 132-152 (LWFF…LLGL), 184-204 (FAIL…LLVF), and 215-235 (MSGD…LLVA).

This sequence belongs to the CobS family. Mg(2+) is required as a cofactor.

The protein resides in the cell membrane. The catalysed reaction is alpha-ribazole + adenosylcob(III)inamide-GDP = adenosylcob(III)alamin + GMP + H(+). It carries out the reaction alpha-ribazole 5'-phosphate + adenosylcob(III)inamide-GDP = adenosylcob(III)alamin 5'-phosphate + GMP + H(+). It functions in the pathway cofactor biosynthesis; adenosylcobalamin biosynthesis; adenosylcobalamin from cob(II)yrinate a,c-diamide: step 7/7. In terms of biological role, joins adenosylcobinamide-GDP and alpha-ribazole to generate adenosylcobalamin (Ado-cobalamin). Also synthesizes adenosylcobalamin 5'-phosphate from adenosylcobinamide-GDP and alpha-ribazole 5'-phosphate. In Sulfolobus acidocaldarius (strain ATCC 33909 / DSM 639 / JCM 8929 / NBRC 15157 / NCIMB 11770), this protein is Adenosylcobinamide-GDP ribazoletransferase.